The sequence spans 122 residues: Large ribosomal subunit protein uL14 (122 aa).

It belongs to the universal ribosomal protein uL14 family. Part of the 50S ribosomal subunit. Forms a cluster with proteins L3 and L19. In the 70S ribosome, L14 and L19 interact and together make contacts with the 16S rRNA in bridges B5 and B8.

In terms of biological role, binds to 23S rRNA. Forms part of two intersubunit bridges in the 70S ribosome. This Orientia tsutsugamushi (strain Boryong) (Rickettsia tsutsugamushi) protein is Large ribosomal subunit protein uL14.